The following is a 238-amino-acid chain: Ribitol-5-phosphate cytidylyltransferase (238 aa).

CTP is bound by residues Phe-7–Gly-10 and Gly-80–Ser-86.

Belongs to the IspD/TarI cytidylyltransferase family. TarI subfamily.

The catalysed reaction is D-ribitol 5-phosphate + CTP + H(+) = CDP-L-ribitol + diphosphate. Catalyzes the transfer of the cytidylyl group of CTP to D-ribitol 5-phosphate. The polypeptide is Ribitol-5-phosphate cytidylyltransferase (Vibrio parahaemolyticus serotype O3:K6 (strain RIMD 2210633)).